A 181-amino-acid polypeptide reads, in one-letter code: Bradykinin-potentiating and C-type natriuretic peptides (181 aa).

The N-terminal stretch at 1–23 (MFVSRLAASGLLLLALLAVSLDG) is a signal peptide. Positions 24-30 (KPLQQWS) are excised as a propeptide. Residue Gln-31 is modified to Pyrrolidone carboxylic acid. The propeptide occupies 41–43 (LVV). Gln-44 bears the Pyrrolidone carboxylic acid mark. Propeptides lie at residues 50 to 78 (TQLQ…AALD) and 90 to 157 (GSKA…KGLA). Residues 74-153 (EAALDTPPAG…GGGGGGARRL (80 aa)) are disordered. A compositionally biased stretch (low complexity) spans 104 to 114 (SKGASATSAAS). Gly residues predominate over residues 140-150 (AGGGGGGGGGA). A disulfide bridge connects residues Cys-165 and Cys-181.

In the N-terminal section; belongs to the bradykinin-potentiating peptide family. This sequence in the C-terminal section; belongs to the natriuretic peptide family. Venom gland.

It is found in the secreted. In terms of biological role, bradykinin-potentiating peptide both inhibits the activity of the angiotensin-converting enzyme (ACE) and enhances the action of bradykinin by inhibiting the peptidases that inactivate it. It acts as an indirect hypotensive agent. Functionally, antagonizes the vasodilatory actions of bradykinin at the B2 bradykinin receptor. Has no demonstrable hypotensive activity when injected intravenously in rats. Its function is as follows. has a vasorelaxant activity in rat aortic strips and a diuretic potency in anesthetized rats. May act by activating natriuretic receptors (NPR1 and/or NPR2). This chain is Bradykinin-potentiating and C-type natriuretic peptides, found in Crotalus durissus collilineatus (Brazilian rattlesnake).